The following is a 296-amino-acid chain: NAD kinase (296 aa).

Aspartate 73 serves as the catalytic Proton acceptor. NAD(+) is bound by residues 73–74 (DG), lysine 78, 151–152 (NE), arginine 178, aspartate 180, and 191–196 (TAHAMS).

This sequence belongs to the NAD kinase family. The cofactor is a divalent metal cation.

Its subcellular location is the cytoplasm. It carries out the reaction NAD(+) + ATP = ADP + NADP(+) + H(+). In terms of biological role, involved in the regulation of the intracellular balance of NAD and NADP, and is a key enzyme in the biosynthesis of NADP. Catalyzes specifically the phosphorylation on 2'-hydroxyl of the adenosine moiety of NAD to yield NADP. This chain is NAD kinase, found in Francisella tularensis subsp. novicida (strain U112).